The following is a 218-amino-acid chain: Probable transaldolase (218 aa).

Lysine 87 (schiff-base intermediate with substrate) is an active-site residue.

It belongs to the transaldolase family. Type 3B subfamily.

Its subcellular location is the cytoplasm. The catalysed reaction is D-sedoheptulose 7-phosphate + D-glyceraldehyde 3-phosphate = D-erythrose 4-phosphate + beta-D-fructose 6-phosphate. It participates in carbohydrate degradation; pentose phosphate pathway; D-glyceraldehyde 3-phosphate and beta-D-fructose 6-phosphate from D-ribose 5-phosphate and D-xylulose 5-phosphate (non-oxidative stage): step 2/3. Its function is as follows. Transaldolase is important for the balance of metabolites in the pentose-phosphate pathway. This Phocaeicola vulgatus (strain ATCC 8482 / DSM 1447 / JCM 5826 / CCUG 4940 / NBRC 14291 / NCTC 11154) (Bacteroides vulgatus) protein is Probable transaldolase.